The chain runs to 315 residues: Phosphatidylglycerol--prolipoprotein diacylglyceryl transferase (315 aa).

2 helical membrane passes run 19-39 (FTIHMYAICILIGICVAVWIL) and 93-113 (VWEGGMAIFGGISVGTLVAFL). Arg-141 contributes to the a 1,2-diacyl-sn-glycero-3-phospho-(1'-sn-glycerol) binding site. 2 consecutive transmembrane segments (helical) span residues 188-208 (LFHPTFLYEMIWNLIGAALII) and 256-276 (VWTAIIVFVLGCILFVVLYQY).

Belongs to the Lgt family.

It localises to the cell membrane. It catalyses the reaction L-cysteinyl-[prolipoprotein] + a 1,2-diacyl-sn-glycero-3-phospho-(1'-sn-glycerol) = an S-1,2-diacyl-sn-glyceryl-L-cysteinyl-[prolipoprotein] + sn-glycerol 1-phosphate + H(+). It participates in protein modification; lipoprotein biosynthesis (diacylglyceryl transfer). Its function is as follows. Catalyzes the transfer of the diacylglyceryl group from phosphatidylglycerol to the sulfhydryl group of the N-terminal cysteine of a prolipoprotein, the first step in the formation of mature lipoproteins. The sequence is that of Phosphatidylglycerol--prolipoprotein diacylglyceryl transferase from Bifidobacterium longum (strain DJO10A).